We begin with the raw amino-acid sequence, 175 residues long: uncharacterized protein (175 aa).

The protein belongs to the asfivirus B175L family.

This is an uncharacterized protein from African swine fever virus (strain Badajoz 1971 Vero-adapted) (Ba71V).